Consider the following 278-residue polypeptide: Potassium/proton antiporter CemA (278 aa).

A run of 4 helical transmembrane segments spans residues 61 to 81, 154 to 174, 203 to 223, and 238 to 258; these read VVFL…FLFG, CAIT…SILI, IILF…EVII, and FIFV…KYWI.

The protein belongs to the CemA family.

Its subcellular location is the plastid. It is found in the chloroplast inner membrane. The catalysed reaction is K(+)(in) + H(+)(out) = K(+)(out) + H(+)(in). In terms of biological role, contributes to K(+)/H(+) antiport activity by supporting proton efflux to control proton extrusion and homeostasis in chloroplasts in a light-dependent manner to modulate photosynthesis. Prevents excessive induction of non-photochemical quenching (NPQ) under continuous-light conditions. Indirectly promotes efficient inorganic carbon uptake into chloroplasts. This is Potassium/proton antiporter CemA from Gracilaria tenuistipitata var. liui (Red alga).